The primary structure comprises 215 residues: Large ribosomal subunit protein uL3 (215 aa).

The segment at 136–161 (GVSISHRSHGSTGQRQDPGKVFKGKK) is disordered. At Q151 the chain carries N5-methylglutamine.

This sequence belongs to the universal ribosomal protein uL3 family. Part of the 50S ribosomal subunit. Forms a cluster with proteins L14 and L19. Methylated by PrmB.

In terms of biological role, one of the primary rRNA binding proteins, it binds directly near the 3'-end of the 23S rRNA, where it nucleates assembly of the 50S subunit. The protein is Large ribosomal subunit protein uL3 of Rickettsia akari (strain Hartford).